Here is a 147-residue protein sequence, read N- to C-terminus: Small nuclear ribonucleoprotein-associated protein B (147 aa).

The 84-residue stretch at 1 to 84 (MGTTKMVSLL…IVSLSVQGPP (84 aa)) folds into the Sm domain. 2 disordered regions span residues 87–106 (DPSM…PAGR) and 128–147 (APPP…FRPV).

It belongs to the snRNP SmB/SmN family. Belongs to the 40S cdc5-associated complex (or cwf complex), a spliceosome sub-complex reminiscent of a late-stage spliceosome composed of the U2, U5 and U6 snRNAs and at least brr2, cdc5, cwf2/prp3, cwf3/syf1, cwf4/syf3, cwf5/ecm2, spp42/cwf6, cwf7/spf27, cwf8, cwf9, cwf10, cwf11, cwf12, prp45/cwf13, cwf14, cwf15, cwf16, cwf17, cwf18, cwf19, cwf20, cwf21, cwf22, cwf23, cwf24, cwf25, cwf26, cyp7/cwf27, cwf28, cwf29/ist3, lea1, msl1, prp5/cwf1, prp10, prp12/sap130, prp17, prp22, sap61, sap62, sap114, sap145, slu7, smb1, smd1, smd3, smf1, smg1 and syf2.

It localises to the nucleus. It is found in the cytoplasm. Functionally, plays a role in pre-mRNA splicing as a core component of the spliceosomal U1, U2, U4 and U5 small nuclear ribonucleoproteins (snRNPs), the building blocks of the spliceosome. This is Small nuclear ribonucleoprotein-associated protein B (smb1) from Schizosaccharomyces pombe (strain 972 / ATCC 24843) (Fission yeast).